Reading from the N-terminus, the 185-residue chain is NADH-quinone oxidoreductase subunit B (185 aa).

The [4Fe-4S] cluster site is built by cysteine 64, cysteine 65, cysteine 129, and cysteine 159.

This sequence belongs to the complex I 20 kDa subunit family. NDH-1 is composed of 14 different subunits. Subunits NuoB, C, D, E, F, and G constitute the peripheral sector of the complex. Requires [4Fe-4S] cluster as cofactor.

The protein localises to the cell inner membrane. It catalyses the reaction a quinone + NADH + 5 H(+)(in) = a quinol + NAD(+) + 4 H(+)(out). In terms of biological role, NDH-1 shuttles electrons from NADH, via FMN and iron-sulfur (Fe-S) centers, to quinones in the respiratory chain. Couples the redox reaction to proton translocation (for every two electrons transferred, four hydrogen ions are translocated across the cytoplasmic membrane), and thus conserves the redox energy in a proton gradient. The sequence is that of NADH-quinone oxidoreductase subunit B from Rhodospirillum rubrum (strain ATCC 11170 / ATH 1.1.1 / DSM 467 / LMG 4362 / NCIMB 8255 / S1).